A 1487-amino-acid polypeptide reads, in one-letter code: Chromosome partition protein MukB (1487 aa).

34-41 (GGNGAGKS) is a binding site for ATP. Coiled coils occupy residues 297-458 (GSRE…TNAL), 506-601 (RESQ…LEAI), 637-666 (LEQEKELSLAKDKLAERRSQLESEIERLAS), 781-806 (RAAREQRLELLRNEREEVVEKHAKAA), 836-1109 (EQAL…ELRT), and 1210-1266 (VEAI…LSNI). A flexible hinge region spans residues 667-784 (PGGSNDPRLK…EIPLFGRAAR (118 aa)).

Belongs to the SMC family. MukB subfamily. As to quaternary structure, homodimerization via its hinge domain. Binds to DNA via its C-terminal region. Interacts, and probably forms a ternary complex, with MukE and MukF via its C-terminal region. The complex formation is stimulated by calcium or magnesium. Interacts with tubulin-related protein FtsZ.

Its subcellular location is the cytoplasm. The protein resides in the nucleoid. Plays a central role in chromosome condensation, segregation and cell cycle progression. Functions as a homodimer, which is essential for chromosome partition. Involved in negative DNA supercoiling in vivo, and by this means organize and compact chromosomes. May achieve or facilitate chromosome segregation by condensation DNA from both sides of a centrally located replisome during cell division. In Vibrio parahaemolyticus serotype O3:K6 (strain RIMD 2210633), this protein is Chromosome partition protein MukB.